The sequence spans 341 residues: Phosphoribosylformylglycinamidine cyclo-ligase (341 aa).

It belongs to the AIR synthase family.

Its subcellular location is the cytoplasm. The catalysed reaction is 2-formamido-N(1)-(5-O-phospho-beta-D-ribosyl)acetamidine + ATP = 5-amino-1-(5-phospho-beta-D-ribosyl)imidazole + ADP + phosphate + H(+). Its pathway is purine metabolism; IMP biosynthesis via de novo pathway; 5-amino-1-(5-phospho-D-ribosyl)imidazole from N(2)-formyl-N(1)-(5-phospho-D-ribosyl)glycinamide: step 2/2. The sequence is that of Phosphoribosylformylglycinamidine cyclo-ligase from Picosynechococcus sp. (strain ATCC 27264 / PCC 7002 / PR-6) (Agmenellum quadruplicatum).